Consider the following 123-residue polypeptide: Highly acidic elicitin 20 (123 aa).

A signal peptide spans 1-20; that stretch reads MQFTALFAATAVALVGSVSA. 3 disulfide bridges follow: Cys-23/Cys-91, Cys-47/Cys-76, and Cys-71/Cys-115.

The protein belongs to the elicitin family.

It is found in the secreted. Functionally, induces local and distal defense responses (incompatible hypersensitive reaction) in plants from the solanaceae and cruciferae families. Elicits leaf necrosis and causes the accumulation of pathogenesis-related proteins. Might interact with the lipidic molecules of the plasma membrane. In Phytophthora cryptogea, this protein is Highly acidic elicitin 20 (B20).